A 622-amino-acid polypeptide reads, in one-letter code: 1-deoxy-D-xylulose-5-phosphate synthase (622 aa).

Residues His80 and 121-123 contribute to the thiamine diphosphate site; that span reads GHS. Asp152 is a binding site for Mg(2+). Thiamine diphosphate-binding positions include 153–154, Asn181, Tyr288, and Glu370; that span reads GA. Asn181 contributes to the Mg(2+) binding site.

The protein belongs to the transketolase family. DXPS subfamily. In terms of assembly, homodimer. The cofactor is Mg(2+). Thiamine diphosphate serves as cofactor.

It catalyses the reaction D-glyceraldehyde 3-phosphate + pyruvate + H(+) = 1-deoxy-D-xylulose 5-phosphate + CO2. Its pathway is metabolic intermediate biosynthesis; 1-deoxy-D-xylulose 5-phosphate biosynthesis; 1-deoxy-D-xylulose 5-phosphate from D-glyceraldehyde 3-phosphate and pyruvate: step 1/1. Its function is as follows. Catalyzes the acyloin condensation reaction between C atoms 2 and 3 of pyruvate and glyceraldehyde 3-phosphate to yield 1-deoxy-D-xylulose-5-phosphate (DXP). The chain is 1-deoxy-D-xylulose-5-phosphate synthase from Shewanella denitrificans (strain OS217 / ATCC BAA-1090 / DSM 15013).